Reading from the N-terminus, the 319-residue chain is Protein sprouty homolog 1 (319 aa).

At Met1 the chain carries N-acetylmethionine. Residues 54 to 160 (TEGPSVVKRP…ERAIRTQPKQ (107 aa)) are disordered. Residues 69 to 79 (PRQEKHERTHE) show a composition bias toward basic and acidic residues. Residues 112 to 131 (SRSTSTGSAASSGSNSSASS) are compositionally biased toward low complexity. The SPR domain occupies 183-295 (QCGKCKCGEC…CYDWIHRPGC (113 aa)).

The protein belongs to the sprouty family. As to quaternary structure, forms heterodimers with SPRY2. Interacts with TESK1. Interacts with CAV1 (via C-terminus).

The protein resides in the cytoplasm. The protein localises to the membrane. Its function is as follows. Inhibits fibroblast growth factor (FGF)-induced retinal lens fiber differentiation, probably by inhibiting FGF-mediated phosphorylation of ERK1/2. Inhibits TGFB-induced epithelial-to-mesenchymal transition in lens epithelial cells. The chain is Protein sprouty homolog 1 (SPRY1) from Cervus elaphus (Red deer).